A 235-amino-acid polypeptide reads, in one-letter code: Large ribosomal subunit protein uL1 (235 aa).

Belongs to the universal ribosomal protein uL1 family. As to quaternary structure, part of the 50S ribosomal subunit.

In terms of biological role, binds directly to 23S rRNA. The L1 stalk is quite mobile in the ribosome, and is involved in E site tRNA release. Functionally, protein L1 is also a translational repressor protein, it controls the translation of the L11 operon by binding to its mRNA. The sequence is that of Large ribosomal subunit protein uL1 from Mycolicibacterium paratuberculosis (strain ATCC BAA-968 / K-10) (Mycobacterium paratuberculosis).